The chain runs to 513 residues: Histidine ammonia-lyase (513 aa).

A cross-link (5-imidazolinone (Ala-Gly)) is located at residues Ala144–Gly146. The residue at position 145 (Ser145) is a 2,3-didehydroalanine (Ser).

The protein belongs to the PAL/histidase family. In terms of processing, contains an active site 4-methylidene-imidazol-5-one (MIO), which is formed autocatalytically by cyclization and dehydration of residues Ala-Ser-Gly.

It is found in the cytoplasm. The catalysed reaction is L-histidine = trans-urocanate + NH4(+). It functions in the pathway amino-acid degradation; L-histidine degradation into L-glutamate; N-formimidoyl-L-glutamate from L-histidine: step 1/3. The chain is Histidine ammonia-lyase from Streptococcus pyogenes serotype M49 (strain NZ131).